The chain runs to 439 residues: Ribosomal protein uS12 methylthiotransferase RimO (439 aa).

The 117-residue stretch at 1 to 117 (MNIGFISLGC…IAGVVNRIAQ (117 aa)) folds into the MTTase N-terminal domain. Residues Cys-10, Cys-46, Cys-80, Cys-154, Cys-158, and Cys-161 each contribute to the [4Fe-4S] cluster site. The Radical SAM core domain maps to 140–370 (TTPPGSAYLK…LRLQQKITRQ (231 aa)). The region spanning 373-439 (LARINTQEKV…RNYDMIGEYQ (67 aa)) is the TRAM domain.

It belongs to the methylthiotransferase family. RimO subfamily. [4Fe-4S] cluster is required as a cofactor.

Its subcellular location is the cytoplasm. It catalyses the reaction L-aspartate(89)-[ribosomal protein uS12]-hydrogen + (sulfur carrier)-SH + AH2 + 2 S-adenosyl-L-methionine = 3-methylsulfanyl-L-aspartate(89)-[ribosomal protein uS12]-hydrogen + (sulfur carrier)-H + 5'-deoxyadenosine + L-methionine + A + S-adenosyl-L-homocysteine + 2 H(+). Its function is as follows. Catalyzes the methylthiolation of an aspartic acid residue of ribosomal protein uS12. This Syntrophomonas wolfei subsp. wolfei (strain DSM 2245B / Goettingen) protein is Ribosomal protein uS12 methylthiotransferase RimO.